The primary structure comprises 1164 residues: Auxin response factor 7 (1164 aa).

Residues 127–229 constitute a DNA-binding region (TF-B3); that stretch reads FCKTLTASDT…QLLLGIRRAN (103 aa). Disordered regions lie at residues 451-505, 536-555, 570-728, 765-858, and 903-930; these read HNNL…QQQL, QQLQSQQHSNNNQSQSQQQQ, HQQP…LLQQ, FLSP…SSSG, and KSKASLTDHQLEASASGTSYGLDGGENN. Residues 464-489 show a composition bias toward polar residues; that stretch reads LSFQTPHGGISSSNLQFNKQNQQAPM. A compositionally biased stretch (low complexity) spans 570-635; that stretch reads HQQPLQQQTQ…SQQASTHHLQ (66 aa). Over residues 637–651 the composition is skewed to polar residues; the sequence is QLVSGSMASSVITPP. Low complexity predominate over residues 652 to 671; that stretch reads SSSLNQSFQQQQQQSKQLQQ. A compositionally biased stretch (polar residues) spans 678–710; sequence ASTSQSSVIETSKSSSNLMSAPPQETQFSRQVE. Composition is skewed to low complexity over residues 711–728 and 765–790; these read QQQPPGLNGQNQQTLLQQ and FLSPQSQLPHHQLQSQQLQQLPTLSQ. Polar residues predominate over residues 791-808; the sequence is GHQFPSSCTNNGLSTLQP. Positions 841–851 are enriched in low complexity; sequence PSSSTSPSTNN. Polar residues predominate over residues 903 to 921; the sequence is KSKASLTDHQLEASASGTS. In terms of domain architecture, PB1 spans 1037–1130; it reads RTYTKVQKRG…EVQQMSLDGN (94 aa). Residues 1145–1164 form a disordered region; it reads DSGNAWRGHYDDNSATSFNR.

The protein belongs to the ARF family. As to quaternary structure, homodimers and heterodimers. Interacts with the auxin-responsive proteins IAA1 and IAA12 (BODENLOS). Interacts (via PB1 domain) with IAA17 (via PB1 domain). Interacts with IAA19. Interacts with ARF5. Binds to JMJ30. Binds to ATXR2 in the nucleus. In terms of tissue distribution, expressed in the whole plant.

Its subcellular location is the nucleus. Auxin response factors (ARFs) are transcriptional factors that bind specifically to the DNA sequence 5'-TGTCTC-3' found in the auxin-responsive promoter elements (AuxREs). Acts as a transcriptional activator of several tropic stimulus-induced (TSI) genes, including SAUR50. Formation of heterodimers with Aux/IAA proteins may alter their ability to modulate early auxin response genes expression. Required for differential growth responses of aerial tissues. Involved in ethylene responses. Regulates lateral root formation through direct regulation of LBD16 and/or LBD29. Functionally redundant with ARF19. Mediates embryo axis formation and vascular tissues differentiation. Functionally redundant with ARF5. Involved in cellular dedifferentiation during callus formation on callus-inducing medium (CIM) and in an ATXR2-dependent manner. The polypeptide is Auxin response factor 7 (Arabidopsis thaliana (Mouse-ear cress)).